The sequence spans 63 residues: Putative alpha-neurotoxin RjAa9 (63 aa).

The region spanning 1-60 (KEGYPVDWGNCKYECMSDEYCKDLCADRKATSGYCYKLNWSCYCKGLPDDSPIKTPGKCR) is the LCN-type CS-alpha/beta domain. 4 cysteine pairs are disulfide-bonded: cysteine 11-cysteine 59, cysteine 15-cysteine 35, cysteine 21-cysteine 42, and cysteine 25-cysteine 44.

This sequence belongs to the long (4 C-C) scorpion toxin superfamily. Sodium channel inhibitor family. Alpha subfamily. In terms of tissue distribution, expressed by the venom gland.

It localises to the secreted. Its function is as follows. Alpha toxins bind voltage-independently at site-3 of sodium channels (Nav) and inhibits the inactivation of the activated channels, thereby blocking neuronal transmission. This is Putative alpha-neurotoxin RjAa9 from Rhopalurus junceus (Caribbean blue scorpion).